The sequence spans 108 residues: Cytochrome bo(3) ubiquinol oxidase subunit 4 (108 aa).

The Cytoplasmic segment spans residues 1–16 (MNKYKKIKNNFDKEKK). The helical transmembrane segment at 17-37 (SYIVGFLFSLFLTIIPFFCTL) threads the bilayer. Residues 38 to 46 (NHLFSRKIN) lie on the Extracellular side of the membrane. The helical transmembrane segment at 47–67 (FFVILLCALSQIIIHFIYFLH) threads the bilayer. The Cytoplasmic segment spans residues 68–77 (LDFSKKNSWN). A helical transmembrane segment spans residues 78–98 (IISLLFILIIVFIIVFGSIWI). Over 99–108 (MYNLNHHVIL) the chain is Extracellular.

It belongs to the cytochrome c oxidase bacterial subunit 4 family. Heterooctamer of two A chains, two B chains, two C chains and two D chains.

It localises to the cell membrane. Its function is as follows. Cytochrome bo(3) ubiquinol terminal oxidase is the component of the aerobic respiratory chain of E.coli that predominates when cells are grown at high aeration. Has proton pump activity across the membrane in addition to electron transfer, pumping 2 protons/electron. In Buchnera aphidicola subsp. Schizaphis graminum (strain Sg), this protein is Cytochrome bo(3) ubiquinol oxidase subunit 4 (cyoD).